Reading from the N-terminus, the 469-residue chain is Neuraminidase (469 aa).

Over 1–6 (MNPNQK) the chain is Intravirion. A helical membrane pass occupies residues 7-27 (IITIGSICMVVGIISLILQIG). The involved in apical transport and lipid raft association stretch occupies residues 11–33 (GSICMVVGIISLILQIGNIVSIW). The Virion surface portion of the chain corresponds to 28-469 (NIVSIWISHS…DAELPLNIDK (442 aa)). The interval 36-90 (HSIQTGNQNHTGTCDQSIITYKNSTWVNQTYVNISNTNVVAGKDTTSVILAGNSS) is hypervariable stalk region. Residues asparagine 44, asparagine 58, asparagine 63, asparagine 68, and asparagine 88 are each glycosylated (N-linked (GlcNAc...) asparagine; by host). The tract at residues 91-469 (LCPIRGWAIY…DAELPLNIDK (379 aa)) is head of neuraminidase. Intrachain disulfides connect cysteine 92–cysteine 417, cysteine 124–cysteine 129, cysteine 184–cysteine 231, cysteine 233–cysteine 238, cysteine 279–cysteine 292, cysteine 281–cysteine 290, cysteine 318–cysteine 335, and cysteine 421–cysteine 446. Arginine 118 contributes to the substrate binding site. A glycan (N-linked (GlcNAc...) asparagine; by host) is linked at asparagine 146. Aspartate 151 serves as the catalytic Proton donor/acceptor. A substrate-binding site is contributed by arginine 152. A glycan (N-linked (GlcNAc...) asparagine; by host) is linked at asparagine 235. 277–278 (EE) provides a ligand contact to substrate. Arginine 293 serves as a coordination point for substrate. Ca(2+) contacts are provided by aspartate 294, glycine 298, and aspartate 324. Asparagine 365 carries N-linked (GlcNAc...) asparagine; by host glycosylation. Arginine 368 serves as a coordination point for substrate. Tyrosine 402 serves as the catalytic Nucleophile.

This sequence belongs to the glycosyl hydrolase 34 family. As to quaternary structure, homotetramer. The cofactor is Ca(2+). Post-translationally, N-glycosylated.

The protein resides in the virion membrane. Its subcellular location is the host apical cell membrane. The catalysed reaction is Hydrolysis of alpha-(2-&gt;3)-, alpha-(2-&gt;6)-, alpha-(2-&gt;8)- glycosidic linkages of terminal sialic acid residues in oligosaccharides, glycoproteins, glycolipids, colominic acid and synthetic substrates.. Its activity is regulated as follows. Inhibited by the neuraminidase inhibitors zanamivir (Relenza) and oseltamivir (Tamiflu). These drugs interfere with the release of progeny virus from infected cells and are effective against all influenza strains. Resistance to neuraminidase inhibitors is quite rare. Functionally, catalyzes the removal of terminal sialic acid residues from viral and cellular glycoconjugates. Cleaves off the terminal sialic acids on the glycosylated HA during virus budding to facilitate virus release. Additionally helps virus spread through the circulation by further removing sialic acids from the cell surface. These cleavages prevent self-aggregation and ensure the efficient spread of the progeny virus from cell to cell. Otherwise, infection would be limited to one round of replication. Described as a receptor-destroying enzyme because it cleaves a terminal sialic acid from the cellular receptors. May facilitate viral invasion of the upper airways by cleaving the sialic acid moieties on the mucin of the airway epithelial cells. Likely to plays a role in the budding process through its association with lipid rafts during intracellular transport. May additionally display a raft-association independent effect on budding. Plays a role in the determination of host range restriction on replication and virulence. Sialidase activity in late endosome/lysosome traffic seems to enhance virus replication. This is Neuraminidase from Influenza A virus (strain A/Fort Monmouth/1/1947 H1N1).